We begin with the raw amino-acid sequence, 188 residues long: Inosine triphosphate pyrophosphatase (188 aa).

An ITP-binding site is contributed by 9–14 (TGNAKK). E39 is a binding site for Mg(2+). ITP contacts are provided by residues K51, 67–68 (DT), K84, 143–146 (FGWD), K166, and 171–172 (HR).

This sequence belongs to the HAM1 NTPase family. Homodimer. The cofactor is Mg(2+). It depends on Mn(2+) as a cofactor.

The protein localises to the cytoplasm. It carries out the reaction ITP + H2O = IMP + diphosphate + H(+). The catalysed reaction is dITP + H2O = dIMP + diphosphate + H(+). The enzyme catalyses XTP + H2O = XMP + diphosphate + H(+). Functionally, pyrophosphatase that hydrolyzes non-canonical purine nucleotides such as inosine triphosphate (ITP), deoxyinosine triphosphate (dITP) or xanthosine 5'-triphosphate (XTP) to their respective monophosphate derivatives. The enzyme does not distinguish between the deoxy- and ribose forms. Probably excludes non-canonical purines from RNA and DNA precursor pools, thus preventing their incorporation into RNA and DNA and avoiding chromosomal lesions. The sequence is that of Inosine triphosphate pyrophosphatase from Anopheles gambiae (African malaria mosquito).